A 342-amino-acid chain; its full sequence is Keratin-associated protein 29-1 (342 aa).

5 consecutive repeat copies span residues 5-9 (CCPEN), 91-95 (CCASD), 239-243 (CCVPP), 309-313 (CCVTG), and 324-328 (CCPPT). The tract at residues 5–328 (CCPENPTAVP…SSGPGCCPPT (324 aa)) is 5 X 5 AA repeats of C-C-X(3).

This sequence belongs to the KRTAP type 10 family.

The chain is Keratin-associated protein 29-1 (Krtap29-1) from Mus musculus (Mouse).